A 453-amino-acid chain; its full sequence is Tubulin delta chain (453 aa).

143-149 (AGGTGSG) is a GTP binding site.

The protein belongs to the tubulin family. Found in a complex with TEDC1, TEDC2, TUBE1 and TUBD1.

The protein resides in the nucleus. Its subcellular location is the cytoplasm. It is found in the cytoskeleton. The protein localises to the microtubule organizing center. It localises to the centrosome. The protein resides in the centriole. Its subcellular location is the cell projection. It is found in the cilium. In terms of biological role, acts as a positive regulator of hedgehog signaling and regulates ciliary function. The polypeptide is Tubulin delta chain (TUBD1) (Macaca fascicularis (Crab-eating macaque)).